The following is a 244-amino-acid chain: Protein TIFY 10b (244 aa).

A Tify domain is found at 97 to 132; the sequence is QEPEKRQLTIFYGGKVLVFNDFPADKAKGLMQLASK. Residues 174 to 244 form a disordered region; sequence QKPARANASD…AVVKPIERGQ (71 aa). The short motif at 185–210 is the Jas element; that stretch reads PIARKASLHRFLEKRKDRLNAKTPYQ. The Nuclear localization signal signature appears at 187-194; that stretch reads ARKASLHR. Residues 194–204 show a composition bias toward basic and acidic residues; sequence RFLEKRKDRLN.

This sequence belongs to the TIFY/JAZ family. Interacts with BHLH148. Interacts with COI1A and COI1B in a coronatine-dependent manner. Coronatine is an analog of jasmonoyl isoleucine (JA-Ile). Post-translationally, ubiquitinated. Targeted for degradation by the SCF(COI1) E3 ubiquitin ligase-proteasome pathway during jasmonate signaling.

Its subcellular location is the nucleus. Its function is as follows. Repressor of jasmonate responses. This chain is Protein TIFY 10b, found in Oryza sativa subsp. japonica (Rice).